Reading from the N-terminus, the 112-residue chain is UPF0060 membrane protein IL2332 (112 aa).

The next 4 membrane-spanning stretches (helical) occupy residues 10-30 (LGLFFITAIAEIIGCYLPYLW), 36-56 (SAWLLIPAAISLAVFAWLLTL), 64-84 (VYAAYGGVYVVTALLWLKAVE), and 90-110 (TYDAVGAAFTLTGMAIIAVGW).

Belongs to the UPF0060 family.

Its subcellular location is the cell inner membrane. This is UPF0060 membrane protein IL2332 from Idiomarina loihiensis (strain ATCC BAA-735 / DSM 15497 / L2-TR).